An 879-amino-acid chain; its full sequence is Alanine--tRNA ligase (879 aa).

Zn(2+) is bound by residues histidine 566, histidine 570, cysteine 668, and histidine 672.

It belongs to the class-II aminoacyl-tRNA synthetase family. Zn(2+) is required as a cofactor.

It localises to the cytoplasm. It catalyses the reaction tRNA(Ala) + L-alanine + ATP = L-alanyl-tRNA(Ala) + AMP + diphosphate. In terms of biological role, catalyzes the attachment of alanine to tRNA(Ala) in a two-step reaction: alanine is first activated by ATP to form Ala-AMP and then transferred to the acceptor end of tRNA(Ala). Also edits incorrectly charged Ser-tRNA(Ala) and Gly-tRNA(Ala) via its editing domain. This is Alanine--tRNA ligase from Clostridium perfringens (strain ATCC 13124 / DSM 756 / JCM 1290 / NCIMB 6125 / NCTC 8237 / Type A).